Here is a 255-residue protein sequence, read N- to C-terminus: Ribonuclease HII (255 aa).

The region spanning 72-255 is the RNase H type-2 domain; that stretch reads AIICGIDEVG…KSFEPIKSLL (184 aa). 3 residues coordinate a divalent metal cation: aspartate 78, glutamate 79, and aspartate 170.

The protein belongs to the RNase HII family. Requires Mn(2+) as cofactor. It depends on Mg(2+) as a cofactor.

The protein resides in the cytoplasm. The enzyme catalyses Endonucleolytic cleavage to 5'-phosphomonoester.. In terms of biological role, endonuclease that specifically degrades the RNA of RNA-DNA hybrids. The protein is Ribonuclease HII of Staphylococcus aureus (strain Mu3 / ATCC 700698).